The primary structure comprises 197 residues: Outer-membrane lipoprotein LolB (197 aa).

The N-terminal stretch at 1–20 (MNRSRRLALFCLGAPLLLQA) is a signal peptide. The N-palmitoyl cysteine moiety is linked to residue cysteine 21. A lipid anchor (S-diacylglycerol cysteine) is attached at cysteine 21.

This sequence belongs to the LolB family. As to quaternary structure, monomer.

It localises to the cell outer membrane. Plays a critical role in the incorporation of lipoproteins in the outer membrane after they are released by the LolA protein. This is Outer-membrane lipoprotein LolB from Cupriavidus necator (strain ATCC 17699 / DSM 428 / KCTC 22496 / NCIMB 10442 / H16 / Stanier 337) (Ralstonia eutropha).